Consider the following 220-residue polypeptide: Flavin-dependent thymidylate synthase (220 aa).

In terms of domain architecture, ThyX spans 1 to 208; sequence MKIDILDKGF…PWTFEAFLKY (208 aa). FAD-binding positions include T55, 78-80, and E86; that span reads RHR. Residues 75 to 78, 86 to 90, and R147 each bind dUMP; these read QWFR and ELSGR. A ThyX motif motif is present at residues 78–88; it reads RHRIASYNELS. Residues 163–165 and N169 each bind FAD; that span reads NAR. R174 contacts dUMP. R174 serves as the catalytic Involved in ionization of N3 of dUMP, leading to its activation.

The protein belongs to the thymidylate synthase ThyX family. In terms of assembly, homotetramer. FAD is required as a cofactor.

The catalysed reaction is dUMP + (6R)-5,10-methylene-5,6,7,8-tetrahydrofolate + NADPH + H(+) = dTMP + (6S)-5,6,7,8-tetrahydrofolate + NADP(+). The protein operates within pyrimidine metabolism; dTTP biosynthesis. Its function is as follows. Catalyzes the reductive methylation of 2'-deoxyuridine-5'-monophosphate (dUMP) to 2'-deoxythymidine-5'-monophosphate (dTMP) while utilizing 5,10-methylenetetrahydrofolate (mTHF) as the methyl donor, and NADPH and FADH(2) as the reductant. This Thermotoga petrophila (strain ATCC BAA-488 / DSM 13995 / JCM 10881 / RKU-1) protein is Flavin-dependent thymidylate synthase.